The sequence spans 89 residues: Small ribosomal subunit protein uS15 (89 aa).

This sequence belongs to the universal ribosomal protein uS15 family. As to quaternary structure, part of the 30S ribosomal subunit. Forms a bridge to the 50S subunit in the 70S ribosome, contacting the 23S rRNA.

Functionally, one of the primary rRNA binding proteins, it binds directly to 16S rRNA where it helps nucleate assembly of the platform of the 30S subunit by binding and bridging several RNA helices of the 16S rRNA. In terms of biological role, forms an intersubunit bridge (bridge B4) with the 23S rRNA of the 50S subunit in the ribosome. In Marinomonas sp. (strain MWYL1), this protein is Small ribosomal subunit protein uS15.